Reading from the N-terminus, the 323-residue chain is tRNA U34 carboxymethyltransferase (323 aa).

Residues K90, W104, K109, G129, 182 to 183 (IE), M197, Y201, and R316 contribute to the carboxy-S-adenosyl-L-methionine site.

Belongs to the class I-like SAM-binding methyltransferase superfamily. CmoB family. As to quaternary structure, homotetramer.

It catalyses the reaction carboxy-S-adenosyl-L-methionine + 5-hydroxyuridine(34) in tRNA = 5-carboxymethoxyuridine(34) in tRNA + S-adenosyl-L-homocysteine + H(+). Catalyzes carboxymethyl transfer from carboxy-S-adenosyl-L-methionine (Cx-SAM) to 5-hydroxyuridine (ho5U) to form 5-carboxymethoxyuridine (cmo5U) at position 34 in tRNAs. The polypeptide is tRNA U34 carboxymethyltransferase (Idiomarina loihiensis (strain ATCC BAA-735 / DSM 15497 / L2-TR)).